Consider the following 275-residue polypeptide: Digeranylgeranylglyceryl phosphate synthase (275 aa).

8 helical membrane passes run 12 to 32 (VHNV…ATTW), 35 to 55 (TPLF…GYVI), 88 to 108 (IVLF…PFGF), 125 to 145 (KLGL…AYYG), 146 to 166 (GLAS…IFFF), 200 to 220 (WIIA…PYFL), 224 to 244 (VIYL…LILH), and 255 to 275 (SLMK…SLRI).

The protein belongs to the UbiA prenyltransferase family. DGGGP synthase subfamily. Requires Mg(2+) as cofactor.

The protein localises to the cell membrane. It carries out the reaction sn-3-O-(geranylgeranyl)glycerol 1-phosphate + (2E,6E,10E)-geranylgeranyl diphosphate = 2,3-bis-O-(geranylgeranyl)-sn-glycerol 1-phosphate + diphosphate. It functions in the pathway membrane lipid metabolism; glycerophospholipid metabolism. Its function is as follows. Prenyltransferase that catalyzes the transfer of the geranylgeranyl moiety of geranylgeranyl diphosphate (GGPP) to the C2 hydroxyl of (S)-3-O-geranylgeranylglyceryl phosphate (GGGP). This reaction is the second ether-bond-formation step in the biosynthesis of archaeal membrane lipids. This is Digeranylgeranylglyceryl phosphate synthase from Sulfolobus acidocaldarius (strain ATCC 33909 / DSM 639 / JCM 8929 / NBRC 15157 / NCIMB 11770).